Consider the following 506-residue polypeptide: MKEYQVYLERARSRQQDFLYPLIFREYIYGLAYSHNWSRSIFLENGGYDNKYSLLNVKRLITRMYQQNHLIISANDSPKNGFWGYNKNFDSQIISEGFAIVVEIPFFLQLSSSLEKAEIIKSYKNVRSIHSIFPFLEDKFTYLNYVSDIRIPYPIHLEILVQILRYWVKDAPFFHLLRLFLYHFSNWNGFITTKKSISTFSKSNPRLFLFLYNFYVCEYESIFLFLRNKSSHLRLKSFSVFLERIFFYAKREHLVEVFAKDFSYPLPFFKDPNIHYVRYQGKCILASKNVPFLMNKWKHYFIHLWQCFFDVWSQPRTININQLSEHSFQLLGYFSNVRLNRSVVRSQMLQNTFLIEIVSKKLDIIVPIIPLIRSLAKAKFCNVLGHPISKPVRADSSDFDIIERFLRICRNLSHYYNGSSKKKNLYRIKYILRLSCIKTLACKHKSTVRAFLKRSGSEELLEEFFTEEEEILSLIFPRDSFTLHRFYRNRIWYLDILFSNDLVNDE.

It belongs to the intron maturase 2 family. MatK subfamily.

The protein localises to the plastid. It is found in the chloroplast. Its function is as follows. Usually encoded in the trnK tRNA gene intron. Probably assists in splicing its own and other chloroplast group II introns. This is Maturase K from Trifolium incarnatum (Crimson clover).